The sequence spans 555 residues: AP2-like ethylene-responsive transcription factor ANT (555 aa).

2 disordered regions span residues 34–56 and 199–231; these read GGRE…SVPP and LSMS…NHQQ. Composition is skewed to low complexity over residues 41–53, 199–208, and 218–231; these read SSST…SSSS, LSMSPGSQSS, and QNQN…NHQQ. 2 consecutive DNA-binding regions (AP2/ERF) follow at residues 283–349 and 385–443; these read QYRG…TNFS and IYRG…TNFD.

Belongs to the AP2/ERF transcription factor family. AP2 subfamily. Interacts with ANL2, HDG2 and HDG10, and possibly with GL2, HDG3, HDG8, ATML1 and PDF2. As to expression, mostly expressed in developing flowers. Also present in mature flowers, siliques and seedlings, but not in mature roots, leaves and stems. Expressed in ovules and in vegetative and floral primordia.

The protein localises to the nucleus. Its function is as follows. Transcription activator that recognizes and binds to the DNA consensus sequence 5'-CAC[AG]N[AT]TNCCNANG-3'. Required for the initiation and growth of ovules integumenta, and for the development of female gametophyte. Plays a critical role in the development of gynoecium marginal tissues (e.g. stigma, style and septa), and in the fusion of carpels and of medial ridges leading to ovule primordia. Also involved in organs initiation and development, including floral organs. Maintains the meristematic competence of cells and consequently sustains expression of cell cycle regulators during organogenesis, thus controlling the final size of each organ by controlling their cell number. Regulates INO autoinduction and expression pattern. As ANT promotes petal cell identity and mediates down-regulation of AG in flower whorl 2, it functions as a class A homeotic gene. The protein is AP2-like ethylene-responsive transcription factor ANT of Arabidopsis thaliana (Mouse-ear cress).